The sequence spans 342 residues: Methylthioribose-1-phosphate isomerase (342 aa).

Substrate is bound by residues 44-46 (RGA), R85, and Q192. The active-site Proton donor is the D233. 243-244 (NK) lines the substrate pocket.

It belongs to the eIF-2B alpha/beta/delta subunits family. MtnA subfamily.

The catalysed reaction is 5-(methylsulfanyl)-alpha-D-ribose 1-phosphate = 5-(methylsulfanyl)-D-ribulose 1-phosphate. It functions in the pathway amino-acid biosynthesis; L-methionine biosynthesis via salvage pathway; L-methionine from S-methyl-5-thio-alpha-D-ribose 1-phosphate: step 1/6. Its function is as follows. Catalyzes the interconversion of methylthioribose-1-phosphate (MTR-1-P) into methylthioribulose-1-phosphate (MTRu-1-P). In Caldicellulosiruptor saccharolyticus (strain ATCC 43494 / DSM 8903 / Tp8T 6331), this protein is Methylthioribose-1-phosphate isomerase.